Consider the following 197-residue polypeptide: Imidazoleglycerol-phosphate dehydratase (197 aa).

It belongs to the imidazoleglycerol-phosphate dehydratase family.

The protein localises to the cytoplasm. The enzyme catalyses D-erythro-1-(imidazol-4-yl)glycerol 3-phosphate = 3-(imidazol-4-yl)-2-oxopropyl phosphate + H2O. Its pathway is amino-acid biosynthesis; L-histidine biosynthesis; L-histidine from 5-phospho-alpha-D-ribose 1-diphosphate: step 6/9. The protein is Imidazoleglycerol-phosphate dehydratase of Bradyrhizobium sp. (strain BTAi1 / ATCC BAA-1182).